We begin with the raw amino-acid sequence, 172 residues long: UPF0102 protein AM1_3954 (172 aa).

Belongs to the UPF0102 family.

This Acaryochloris marina (strain MBIC 11017) protein is UPF0102 protein AM1_3954.